Consider the following 228-residue polypeptide: U1 small nuclear ribonucleoprotein C (228 aa).

The Matrin-type zinc finger occupies 4-36 (YYCEYCDIYLTHSSPVGRRQHVQGRKHISAKIE). Positions 179–190 (LVKDNPNEERNG) are enriched in basic and acidic residues. The segment at 179-228 (LVKDNPNEERNGDSAIANQPSTMHHEEDQDDPANATGGTANNNDNVSINA) is disordered. Positions 211-221 (ANATGGTANNN) are enriched in low complexity.

Belongs to the U1 small nuclear ribonucleoprotein C family. In terms of assembly, U1 snRNP is composed of the 7 core Sm proteins B/B', D1, D2, D3, E, F and G that assemble in a heptameric protein ring on the Sm site of the small nuclear RNA to form the core snRNP, and at least 3 U1 snRNP-specific proteins U1-70K, U1-A and U1-C. U1-C interacts with U1 snRNA and the 5' splice-site region of the pre-mRNA.

The protein localises to the nucleus. Component of the spliceosomal U1 snRNP, which is essential for recognition of the pre-mRNA 5' splice-site and the subsequent assembly of the spliceosome. U1-C is directly involved in initial 5' splice-site recognition for both constitutive and regulated alternative splicing. The interaction with the 5' splice-site seems to precede base-pairing between the pre-mRNA and the U1 snRNA. Stimulates commitment or early (E) complex formation by stabilizing the base pairing of the 5' end of the U1 snRNA and the 5' splice-site region. This is U1 small nuclear ribonucleoprotein C from Plasmodium knowlesi (strain H).